The primary structure comprises 70 residues: Cold shock-like protein CspG (70 aa).

The CSD domain maps to 7 to 67 (GLVKWFNEEK…GQKGLQAANV (61 aa)).

It localises to the cytoplasm. This chain is Cold shock-like protein CspG (cspG), found in Shewanella violacea (strain JCM 10179 / CIP 106290 / LMG 19151 / DSS12).